The sequence spans 477 residues: Bifunctional protein HldE (477 aa).

The ribokinase stretch occupies residues 1-318 (MKVNLPAFER…ENAVRGRADT (318 aa)). 195–198 (NLSE) serves as a coordination point for ATP. Residue Asp264 is part of the active site. A cytidylyltransferase region spans residues 344–477 (MTNGVFDILH…IKKIQTESEK (134 aa)).

This sequence in the N-terminal section; belongs to the carbohydrate kinase PfkB family. The protein in the C-terminal section; belongs to the cytidylyltransferase family. In terms of assembly, homodimer.

The enzyme catalyses D-glycero-beta-D-manno-heptose 7-phosphate + ATP = D-glycero-beta-D-manno-heptose 1,7-bisphosphate + ADP + H(+). It catalyses the reaction D-glycero-beta-D-manno-heptose 1-phosphate + ATP + H(+) = ADP-D-glycero-beta-D-manno-heptose + diphosphate. The protein operates within nucleotide-sugar biosynthesis; ADP-L-glycero-beta-D-manno-heptose biosynthesis; ADP-L-glycero-beta-D-manno-heptose from D-glycero-beta-D-manno-heptose 7-phosphate: step 1/4. It participates in nucleotide-sugar biosynthesis; ADP-L-glycero-beta-D-manno-heptose biosynthesis; ADP-L-glycero-beta-D-manno-heptose from D-glycero-beta-D-manno-heptose 7-phosphate: step 3/4. Its function is as follows. Catalyzes the phosphorylation of D-glycero-D-manno-heptose 7-phosphate at the C-1 position to selectively form D-glycero-beta-D-manno-heptose-1,7-bisphosphate. Catalyzes the ADP transfer from ATP to D-glycero-beta-D-manno-heptose 1-phosphate, yielding ADP-D-glycero-beta-D-manno-heptose. The chain is Bifunctional protein HldE from Salmonella agona (strain SL483).